The chain runs to 212 residues: Troponin I, cardiac muscle (212 aa).

Over residues 1–11 the composition is skewed to polar residues; the sequence is MADRSGGSTAG. The tract at residues 1–45 is disordered; that stretch reads MADRSGGSTAGDTVPAPPPVRRRSSANYRAYATEPHAKKKSKISA. Position 2 is an N-acetylalanine (alanine 2). Serine 5 carries the phosphoserine modification. Serine 24 and serine 25 each carry phosphoserine; by PKA and PKD/PRKD1. Tyrosine 28 is modified (phosphotyrosine). Position 33 is a phosphothreonine; by STK4/MST1 (threonine 33). Positions 34 to 81 are involved in binding TNC; the sequence is EPHAKKKSKISASRKLQLKTLMLQIAKQELEREAEERRGEKGRALSTR. Residues serine 44 and serine 46 each carry the phosphoserine; by PKC/PRKCE modification. Threonine 53 bears the Phosphothreonine; by STK4/MST1 mark. Serine 79 is modified (phosphoserine). Threonine 80 carries the post-translational modification Phosphothreonine. Positions 131-151 are involved in binding TNC and actin; sequence NQKIFDLRGKFKRPTLRRVRI. Position 145 is a phosphothreonine; by STK4/MST1 (threonine 145). Residue serine 152 is modified to Phosphoserine; by PAK3. At threonine 183 the chain carries Phosphothreonine. Phosphoserine is present on serine 201.

The protein belongs to the troponin I family. Interacts with TRIM63. Binds to actin and tropomyosin. Interacts with STK4/MST1. In terms of processing, phosphorylated at Ser-24 and Ser-25 by PRKD1; phosphorylation reduces myofilament calcium sensitivity. Phosphorylated preferentially at Thr-33. Phosphorylation by STK4/MST1 alters its binding affinity to TNNC1 (cardiac Tn-C) and TNNT2 (cardiac Tn-T). Phosphorylated at Ser-44 and Ser-46 by PRKCE; phosphorylation increases myocardium contractile dysfunction.

Troponin I is the inhibitory subunit of troponin, the thin filament regulatory complex which confers calcium-sensitivity to striated muscle actomyosin ATPase activity. The chain is Troponin I, cardiac muscle (TNNI3) from Bos taurus (Bovine).